The chain runs to 283 residues: MASLGQIIFWSIINIIIILAGAIALIIGFGISGKHFITVTTFTSAGNIGEDGTLSCTFEPDIKLNGIVIQWLKEGIKGLVHEFKEGKDDLSQQHEMFRGRTAVFADQVVVGNASLRLKNVQLTDAGTYTCYIRTSKGKGNANLEYKTGAFSMPEINVDYNASSESLRCEAPRWFPQPTVAWASQVDQGANFSEVSNTSFELNSENVTMKVVSVLYNVTINNTYSCMIENDIAKATGDIKVTDSEVKRRSQLQLLNSGPSPCVFSSAFVAGWALLSLSCCLMLR.

An N-terminal signal peptide occupies residues 1 to 24; sequence MASLGQIIFWSIINIIIILAGAIA. Ig-like V-type domains follow at residues 35–144 and 153–241; these read HFIT…ANLE and PEIN…IKVT. Cystine bridges form between Cys56-Cys130 and Cys168-Cys225. Residue Asn216 is glycosylated (N-linked (GlcNAc...) asparagine). The GPI-anchor amidated glycine moiety is linked to residue Gly257. A propeptide spans 258-283 (removed in mature form); sequence PSPCVFSSAFVAGWALLSLSCCLMLR.

Belongs to the immunoglobulin superfamily. BTN/MOG family. N-glycosylated. As to expression, expressed on the surface of professional antigen-presenting cells (at protein level). Widely expressed, including in kidney, liver, lung, pancreas, placenta, prostate, spleen, testis and thymus.

It localises to the cell membrane. In terms of biological role, negatively regulates T-cell-mediated immune response by inhibiting T-cell activation, proliferation, cytokine production and development of cytotoxicity. When expressed on the cell surface of tumor macrophages, plays an important role, together with regulatory T-cells (Treg), in the suppression of tumor-associated antigen-specific T-cell immunity. Involved in promoting epithelial cell transformation. This Mus musculus (Mouse) protein is V-set domain containing T-cell activation inhibitor 1.